The primary structure comprises 162 residues: Shikimate kinase (162 aa).

Gly10–Thr15 serves as a coordination point for ATP. Ser14 contacts Mg(2+). Substrate-binding residues include Asp28, Arg52, and Gly73. Position 113 (Arg113) interacts with ATP. Arg129 contacts substrate.

It belongs to the shikimate kinase family. Monomer. The cofactor is Mg(2+).

It localises to the cytoplasm. It carries out the reaction shikimate + ATP = 3-phosphoshikimate + ADP + H(+). It functions in the pathway metabolic intermediate biosynthesis; chorismate biosynthesis; chorismate from D-erythrose 4-phosphate and phosphoenolpyruvate: step 5/7. Functionally, catalyzes the specific phosphorylation of the 3-hydroxyl group of shikimic acid using ATP as a cosubstrate. The protein is Shikimate kinase of Lactococcus lactis subsp. cremoris (strain MG1363).